A 301-amino-acid polypeptide reads, in one-letter code: Tyrosine recombinase XerC (301 aa).

The 85-residue stretch at 1–85 (MELISLFKQY…ALRSFYRFLV (85 aa)) folds into the Core-binding (CB) domain. Residues 106 to 292 (KLPHFFYEKE…TKEKLQESYR (187 aa)) form the Tyr recombinase domain. Residues R147, K171, H244, R247, and H270 contribute to the active site. Y279 acts as the O-(3'-phospho-DNA)-tyrosine intermediate in catalysis.

The protein belongs to the 'phage' integrase family. XerC subfamily. As to quaternary structure, forms a cyclic heterotetrameric complex composed of two molecules of XerC and two molecules of XerD.

It is found in the cytoplasm. Functionally, site-specific tyrosine recombinase, which acts by catalyzing the cutting and rejoining of the recombining DNA molecules. The XerC-XerD complex is essential to convert dimers of the bacterial chromosome into monomers to permit their segregation at cell division. It also contributes to the segregational stability of plasmids. In Pediococcus pentosaceus (strain ATCC 25745 / CCUG 21536 / LMG 10740 / 183-1w), this protein is Tyrosine recombinase XerC.